The sequence spans 681 residues: Glutamine--fructose-6-phosphate aminotransferase [isomerizing] 1 (681 aa).

The active-site For GATase activity is C2. In terms of domain architecture, Glutamine amidotransferase type-2 spans 2-287 (CGIFAYLNYH…DDDVAAVVDG (286 aa)). S103 and S243 each carry phosphoserine. The segment at 295–662 (KRTARDHPGR…LQLLAFHLAV (368 aa)) is isomerase. SIS domains lie at 359–498 (HIKE…DRIS) and 530–671 (LATE…VDFP). Substrate-binding positions include 376–377 (TS), 421–423 (SQS), T426, and H577.

Homotetramer, may also exist as homodimers.

The catalysed reaction is D-fructose 6-phosphate + L-glutamine = D-glucosamine 6-phosphate + L-glutamate. It participates in nucleotide-sugar biosynthesis; UDP-N-acetyl-alpha-D-glucosamine biosynthesis; alpha-D-glucosamine 6-phosphate from D-fructose 6-phosphate: step 1/1. Inhibited by 4,4'-dithiodipyridine. Its function is as follows. Controls the flux of glucose into the hexosamine pathway. Most likely involved in regulating the availability of precursors for N- and O-linked glycosylation of proteins. Regulates the circadian expression of clock genes BMAL1 and CRY1. Has a role in fine tuning the metabolic fluctuations of cytosolic UDP-GlcNAc and its effects on hyaluronan synthesis that occur during tissue remodeling. The chain is Glutamine--fructose-6-phosphate aminotransferase [isomerizing] 1 (Gfpt1) from Rattus norvegicus (Rat).